The primary structure comprises 254 residues: Bax inhibitor 1 homolog (254 aa).

The Cytoplasmic portion of the chain corresponds to 1-43; sequence MASTSNRNFFSSNMTQIPMDEKIRIALQFNNLSQSTKQTLTKV. A helical membrane pass occupies residues 44–64; that stretch reads YCALAIGILTATVGVLFSMFI. Over 65 to 66 the chain is Lumenal; that stretch reads YR. Residues 67–87 form a helical membrane-spanning segment; it reads PGFLMTLLLVIGSAILFATTP. At 88–98 the chain is on the cytoplasmic side; it reads RTQDYKTQVKR. The helical transmembrane segment at 99–119 threads the bilayer; that stretch reads FTLFNLVTFVTGMSSSGLIEL. The Lumenal portion of the chain corresponds to 120 to 126; sequence YMDINSS. The helical transmembrane segment at 127 to 147 threads the bilayer; sequence IVLNAFMATCGIFISFTLFSL. The Cytoplasmic segment spans residues 148-152; sequence LTNKR. The helical transmembrane segment at 153-173 threads the bilayer; sequence LYIFIGSSLASLSIGIFVLAL. Residues 174 to 187 are Lumenal-facing; the sequence is TRLFGGYSEPLDQL. A helical membrane pass occupies residues 188 to 208; the sequence is FILAILASSVLFIIFDTQIMV. The Cytoplasmic portion of the chain corresponds to 209-217; it reads HRIENLGEK. Positions 218-238 form an intramembrane region, helical; that stretch reads DVLFHAFILFYDFVDLFRVIL. Residues 239–254 are Cytoplasmic-facing; sequence KILAKKENKNNNKSRR.

It belongs to the BI1 family.

It localises to the endoplasmic reticulum membrane. The protein is Bax inhibitor 1 homolog of Dictyostelium discoideum (Social amoeba).